A 179-amino-acid polypeptide reads, in one-letter code: UPF0134 protein MPN_145 (179 aa).

This sequence belongs to the UPF0134 family.

This chain is UPF0134 protein MPN_145, found in Mycoplasma pneumoniae (strain ATCC 29342 / M129 / Subtype 1) (Mycoplasmoides pneumoniae).